The sequence spans 232 residues: uncharacterized protein (232 aa).

This is an uncharacterized protein from Aedes vexans (Inland floodwater mosquito).